A 167-amino-acid polypeptide reads, in one-letter code: Phospholipase A2 (167 aa).

Positions 1–18 (MQVVLGSLFLLLLSTSHG) are cleaved as a signal peptide. Positions 19–33 (WQIRDRIGDNELEER) are excised as a propeptide. Ca(2+)-binding residues include W41, G43, and G45. Cystine bridges form between C42/C64, C63/C103, C70/C96, C94/C128, and C138/C146. A glycan (N-linked (GlcNAc...) asparagine) is linked at N46. Residue H67 is part of the active site. D68 serves as a coordination point for Ca(2+). The active site involves D97.

It belongs to the phospholipase A2 family. Group III subfamily. Ca(2+) serves as cofactor. Post-translationally, N-glycosylated; contains mannose, N-acetylglucosamine and fucose alphal-6 and/or alphal-3 linked to the innermost N-acetylglucosamine. Expressed by the venom gland.

The protein localises to the secreted. The enzyme catalyses a 1,2-diacyl-sn-glycero-3-phosphocholine + H2O = a 1-acyl-sn-glycero-3-phosphocholine + a fatty acid + H(+). Functionally, in vivo, intraplantar injection in mice cause spontaneous pain behaviors and paw swelling. PLA2 catalyzes the calcium-dependent hydrolysis of the 2-acyl groups in 3-sn-phosphoglycerides. This chain is Phospholipase A2, found in Apis mellifera (Honeybee).